We begin with the raw amino-acid sequence, 75 residues long: uncharacterized protein (75 aa).

In terms of domain architecture, LysM spans 29–72; the sequence is EVYHVESGDTLWTIAKSFEIPVQQLMNLNKLSSDRIYPGQIIKI.

This is an uncharacterized protein from Bacillus subtilis (strain 168).